A 453-amino-acid polypeptide reads, in one-letter code: tRNA modification GTPase MnmE (453 aa).

(6S)-5-formyl-5,6,7,8-tetrahydrofolate contacts are provided by Arg-22, Glu-79, and Lys-119. Residues 215–376 (GMKVVIAGRP…LKQHLKSLMG (162 aa)) enclose the TrmE-type G domain. Residue Asn-225 participates in K(+) binding. GTP contacts are provided by residues 225 to 230 (NAGKSS), 244 to 250 (TEIAGTT), 269 to 272 (DTAG), and 334 to 337 (NKAD). Residue Ser-229 coordinates Mg(2+). Residues Thr-244, Ile-246, and Thr-249 each contribute to the K(+) site. Residue Thr-250 coordinates Mg(2+). Residue Lys-453 participates in (6S)-5-formyl-5,6,7,8-tetrahydrofolate binding.

Belongs to the TRAFAC class TrmE-Era-EngA-EngB-Septin-like GTPase superfamily. TrmE GTPase family. As to quaternary structure, homodimer. Heterotetramer of two MnmE and two MnmG subunits. Requires K(+) as cofactor.

Its subcellular location is the cytoplasm. Functionally, exhibits a very high intrinsic GTPase hydrolysis rate. Involved in the addition of a carboxymethylaminomethyl (cmnm) group at the wobble position (U34) of certain tRNAs, forming tRNA-cmnm(5)s(2)U34. In Shewanella baltica (strain OS195), this protein is tRNA modification GTPase MnmE.